The primary structure comprises 377 residues: Beta sliding clamp (377 aa).

This sequence belongs to the beta sliding clamp family. In terms of assembly, forms a ring-shaped head-to-tail homodimer around DNA which binds and tethers DNA polymerases and other proteins to the DNA. The DNA replisome complex has a single clamp-loading complex (3 tau and 1 each of delta, delta', psi and chi subunits) which binds 3 Pol III cores (1 core on the leading strand and 2 on the lagging strand) each with a beta sliding clamp dimer. Additional proteins in the replisome are other copies of gamma, psi and chi, Ssb, DNA helicase and RNA primase.

It is found in the cytoplasm. Confers DNA tethering and processivity to DNA polymerases and other proteins. Acts as a clamp, forming a ring around DNA (a reaction catalyzed by the clamp-loading complex) which diffuses in an ATP-independent manner freely and bidirectionally along dsDNA. Initially characterized for its ability to contact the catalytic subunit of DNA polymerase III (Pol III), a complex, multichain enzyme responsible for most of the replicative synthesis in bacteria; Pol III exhibits 3'-5' exonuclease proofreading activity. The beta chain is required for initiation of replication as well as for processivity of DNA replication. The polypeptide is Beta sliding clamp (dnaN) (Staphylococcus aureus (strain COL)).